Reading from the N-terminus, the 930-residue chain is Protocadherin gamma-A4 (930 aa).

Residues 1–27 (MAAPYKSDRRGLIWICIFLGSLCDIRA) form the signal peptide. Cadherin domains follow at residues 28-132 (EQIR…APSF), 133-241 (GAQQ…APVF), 242-346 (TQPE…APEV), 347-451 (TVTS…PPTF), 452-561 (THAS…TPEI), and 569-682 (DGST…APID). At 28 to 691 (EQIRYSVPEE…DQEDSDITLY (664 aa)) the chain is on the extracellular side. 2 N-linked (GlcNAc...) asparagine glycosylation sites follow: Asn418 and Asn544. The chain crosses the membrane as a helical span at residues 692 to 712 (LVVAVAAVSCVFLAFVIVLLI). Residues 713–930 (HRLRRWHSTR…KKKSGKKEKK (218 aa)) are Cytoplasmic-facing. Disordered stretches follow at residues 803–839 (SSLQ…WPNN) and 900–930 (ATLT…KEKK). The segment covering 920–930 (NKKKSGKKEKK) has biased composition (basic residues).

The protein resides in the cell membrane. Its function is as follows. Potential calcium-dependent cell-adhesion protein. May be involved in the establishment and maintenance of specific neuronal connections in the brain. This Mus musculus (Mouse) protein is Protocadherin gamma-A4.